We begin with the raw amino-acid sequence, 215 residues long: Large ribosomal subunit protein uL3 (215 aa).

The disordered stretch occupies residues 136–155; sequence GVSISHRSHGSTGQRQDPGK. An N5-methylglutamine modification is found at Q151.

This sequence belongs to the universal ribosomal protein uL3 family. As to quaternary structure, part of the 50S ribosomal subunit. Forms a cluster with proteins L14 and L19. Post-translationally, methylated by PrmB.

Its function is as follows. One of the primary rRNA binding proteins, it binds directly near the 3'-end of the 23S rRNA, where it nucleates assembly of the 50S subunit. This Rickettsia felis (strain ATCC VR-1525 / URRWXCal2) (Rickettsia azadi) protein is Large ribosomal subunit protein uL3.